Consider the following 755-residue polypeptide: ABC transporter G family member 2 (755 aa).

Residues Leu98–Glu358 enclose the ABC transporter domain. ATP is bound at residue Gly151–Ser158. One can recognise an ABC transmembrane type-2 domain in the interval Ile449–Phe659. 6 helical membrane-spanning segments follow: residues Leu468–Thr488, Phe503–Leu523, Ile552–Leu572, Phe579–Phe599, Leu609–Ile629, and Leu728–Ile748.

It belongs to the ABC transporter superfamily. ABCG family. Eye pigment precursor importer (TC 3.A.1.204) subfamily.

The protein resides in the membrane. The sequence is that of ABC transporter G family member 2 (ABCG2) from Arabidopsis thaliana (Mouse-ear cress).